We begin with the raw amino-acid sequence, 678 residues long: Exoribonuclease 2 (678 aa).

The region spanning 193-521 (REDLTALPFV…INHRLLKAHI (329 aa)) is the RNB domain. One can recognise an S1 motif domain in the interval 568 to 650 (ETRFQAEIFD…ENRSLVGKPT (83 aa)). A disordered region spans residues 659–678 (ETQTSAEQPAEGAENNEPQV).

It belongs to the RNR ribonuclease family. RNase II subfamily.

It localises to the cytoplasm. The catalysed reaction is Exonucleolytic cleavage in the 3'- to 5'-direction to yield nucleoside 5'-phosphates.. Involved in mRNA degradation. Hydrolyzes single-stranded polyribonucleotides processively in the 3' to 5' direction. The chain is Exoribonuclease 2 from Vibrio cholerae serotype O1 (strain ATCC 39315 / El Tor Inaba N16961).